A 373-amino-acid polypeptide reads, in one-letter code: CASP-like protein UU6 (373 aa).

Disordered regions lie at residues 1–100 (MGTL…GSEG) and 172–195 (TKET…PKKK). At 1-204 (MGTLTDPTVD…KHRLRKHLTA (204 aa)) the chain is on the cytoplasmic side. Residues 56–74 (KTNTGNAAESTASTENGET) show a composition bias toward polar residues. The chain crosses the membrane as a helical span at residues 205-225 (IGAYSFAFRFSETVLSLIAIV). Over 226 to 253 (VMCSTRGSMRTDGVDFGTLKFNHFQAYR) the chain is Extracellular. The helical transmembrane segment at 254-274 (YLVAVNVIVFVYSTFQFIQLL) threads the bilayer. Topologically, residues 275–276 (YT) are cytoplasmic. The chain crosses the membrane as a helical span at residues 277 to 297 (VILGISFIPSIFISTWMTFGF). The Extracellular segment spans residues 298-342 (DQLFLYLLLSASTSAATVANMSYTGEMGIQLCSRFDVGSFCSKAD). An N-linked (GlcNAc...) asparagine glycan is attached at Asn317. A helical transmembrane segment spans residues 343 to 363 (VAVTMSFFAVLAMLSSTILAI). The Cytoplasmic segment spans residues 364-373 (YRIAVLLREY).

It belongs to the Casparian strip membrane proteins (CASP) family. As to quaternary structure, homodimer and heterodimers.

Its subcellular location is the cell membrane. The chain is CASP-like protein UU6 from Physcomitrium patens (Spreading-leaved earth moss).